The chain runs to 274 residues: 4-hydroxy-tetrahydrodipicolinate reductase (274 aa).

NAD(+) is bound at residue 12 to 17 (GAAGRM). Arg39 provides a ligand contact to NADP(+). NAD(+)-binding positions include 102-104 (GTT) and 126-129 (SGNM). Catalysis depends on His160, which acts as the Proton donor/acceptor. His161 lines the (S)-2,3,4,5-tetrahydrodipicolinate pocket. Lys164 (proton donor) is an active-site residue. 170-171 (GT) provides a ligand contact to (S)-2,3,4,5-tetrahydrodipicolinate.

Belongs to the DapB family.

It is found in the cytoplasm. The enzyme catalyses (S)-2,3,4,5-tetrahydrodipicolinate + NAD(+) + H2O = (2S,4S)-4-hydroxy-2,3,4,5-tetrahydrodipicolinate + NADH + H(+). The catalysed reaction is (S)-2,3,4,5-tetrahydrodipicolinate + NADP(+) + H2O = (2S,4S)-4-hydroxy-2,3,4,5-tetrahydrodipicolinate + NADPH + H(+). It participates in amino-acid biosynthesis; L-lysine biosynthesis via DAP pathway; (S)-tetrahydrodipicolinate from L-aspartate: step 4/4. Catalyzes the conversion of 4-hydroxy-tetrahydrodipicolinate (HTPA) to tetrahydrodipicolinate. The sequence is that of 4-hydroxy-tetrahydrodipicolinate reductase from Rhizobium rhizogenes (strain K84 / ATCC BAA-868) (Agrobacterium radiobacter).